The following is a 108-amino-acid chain: Small ribosomal subunit protein uS10 (108 aa).

Belongs to the universal ribosomal protein uS10 family. As to quaternary structure, part of the 30S ribosomal subunit.

In terms of biological role, involved in the binding of tRNA to the ribosomes. The sequence is that of Small ribosomal subunit protein uS10 from Mycoplasma pneumoniae (strain ATCC 29342 / M129 / Subtype 1) (Mycoplasmoides pneumoniae).